The chain runs to 570 residues: Structure-specific endonuclease subunit EME1 (570 aa).

Residues 1–12 show a composition bias toward low complexity; it reads MALKKSSPSLDS. The disordered stretch occupies residues 1–42; that stretch reads MALKKSSPSLDSGDSDSEELPTFAFLKKEPSSTKRRQPEREE. Ser-12 and Ser-15 each carry phosphoserine. Over residues 26-42 the composition is skewed to basic and acidic residues; it reads LKKEPSSTKRRQPEREE. Ser-84, Ser-85, and Ser-87 each carry phosphoserine. A Glycyl lysine isopeptide (Lys-Gly) (interchain with G-Cter in SUMO2) cross-link involves residue Lys-103. Phosphoserine is present on residues Ser-111 and Ser-117. Residues Lys-136 and Lys-141 each participate in a glycyl lysine isopeptide (Lys-Gly) (interchain with G-Cter in SUMO2) cross-link. Phosphothreonine is present on Thr-150. Disordered stretches follow at residues 187–233 and 372–400; these read KTNS…ERKN and AQNPPRRGKQGANKQTKKQQQRQPEASIG. A compositionally biased stretch (basic and acidic residues) spans 220–233; the sequence is RQKESTLRRQERKN. The tract at residues 250-456 is nuclease-like domain; forms the post-nick DNA binding interface and is involved in DNA recognition and bending; the sequence is KHIIVVLDPV…PFKKLRDETT (207 aa). The helix-hairpin-helix (2HhH); forms the pre-nick DNA binding interface and is involved in DNA recognition and bending stretch occupies residues 476 to 570; the sequence is RGLALVWRRQ…QPHLSLDSAD (95 aa).

It belongs to the EME1/MMS4 family. Part of the heterodimeric MUS81-EME1 complex.

Its subcellular location is the nucleus. It is found in the nucleolus. In terms of biological role, non-catalytic subunit of the structure-specific, heterodimeric DNA endonuclease MUS81-EME1 which is involved in the maintenance of genome stability. In the complex, EME1 is required for DNA cleavage, participating in DNA recognition and bending. MUS81-EME1 cleaves 3'-flaps and nicked Holliday junctions, and exhibit limited endonuclease activity with 5' flaps and nicked double-stranded DNAs. Active during prometaphase, MUS81-EME1 resolves mitotic recombination intermediates, including Holliday junctions, which form during homologous recombination. This Homo sapiens (Human) protein is Structure-specific endonuclease subunit EME1.